The primary structure comprises 173 residues: Adenine phosphoribosyltransferase (173 aa).

The protein belongs to the purine/pyrimidine phosphoribosyltransferase family. In terms of assembly, homodimer.

It is found in the cytoplasm. The enzyme catalyses AMP + diphosphate = 5-phospho-alpha-D-ribose 1-diphosphate + adenine. It functions in the pathway purine metabolism; AMP biosynthesis via salvage pathway; AMP from adenine: step 1/1. In terms of biological role, catalyzes a salvage reaction resulting in the formation of AMP, that is energically less costly than de novo synthesis. The polypeptide is Adenine phosphoribosyltransferase (Listeria monocytogenes serotype 4b (strain CLIP80459)).